A 286-amino-acid polypeptide reads, in one-letter code: Thymidylate synthase (286 aa).

Residue 140 to 141 participates in dUMP binding; it reads RR. The active-site Nucleophile is the cysteine 161. DUMP-binding positions include 185-188, asparagine 196, and 226-228; these read RSND and HIY. A (6R)-5,10-methylene-5,6,7,8-tetrahydrofolate-binding site is contributed by aspartate 188. Alanine 285 contributes to the (6R)-5,10-methylene-5,6,7,8-tetrahydrofolate binding site.

This sequence belongs to the thymidylate synthase family. Bacterial-type ThyA subfamily. In terms of assembly, homodimer.

It localises to the cytoplasm. It carries out the reaction dUMP + (6R)-5,10-methylene-5,6,7,8-tetrahydrofolate = 7,8-dihydrofolate + dTMP. It participates in pyrimidine metabolism; dTTP biosynthesis. In terms of biological role, catalyzes the reductive methylation of 2'-deoxyuridine-5'-monophosphate (dUMP) to 2'-deoxythymidine-5'-monophosphate (dTMP) while utilizing 5,10-methylenetetrahydrofolate (mTHF) as the methyl donor and reductant in the reaction, yielding dihydrofolate (DHF) as a by-product. This enzymatic reaction provides an intracellular de novo source of dTMP, an essential precursor for DNA biosynthesis. The protein is Thymidylate synthase of Streptococcus thermophilus (strain ATCC BAA-491 / LMD-9).